Here is a 265-residue protein sequence, read N- to C-terminus: uncharacterized protein (265 aa).

Histidine 7, histidine 9, glutamate 94, histidine 130, histidine 155, and aspartate 205 together coordinate a divalent metal cation.

This sequence belongs to the metallo-dependent hydrolases superfamily. TatD-type hydrolase family. A divalent metal cation serves as cofactor.

This is an uncharacterized protein from Escherichia coli O157:H7.